The primary structure comprises 138 residues: Acidic phospholipase A2 Ts-A3 (138 aa).

Positions 1–16 (MRTLWIMAVLLLGVEG) are cleaved as a signal peptide. 7 cysteine pairs are disulfide-bonded: Cys-42/Cys-132, Cys-44/Cys-60, Cys-59/Cys-111, Cys-65/Cys-138, Cys-66/Cys-104, Cys-73/Cys-97, and Cys-91/Cys-102. Ca(2+) contacts are provided by Tyr-43, Gly-45, and Gly-47. The active site involves His-63. Asp-64 serves as a coordination point for Ca(2+). Asp-105 is a catalytic residue.

It depends on Ca(2+) as a cofactor. Expressed by the venom gland.

The protein resides in the secreted. The enzyme catalyses a 1,2-diacyl-sn-glycero-3-phosphocholine + H2O = a 1-acyl-sn-glycero-3-phosphocholine + a fatty acid + H(+). Its function is as follows. Snake venom phospholipase A2 (PLA2) that shows a moderate inhibition of ADP-induced human platelet aggregation when tested on platelet rich plasma. Exhibits high hydrolytic activities and prefers the anionic micelles (dPPC with deoxycholate) to the zwitterionic micelles (dPPC with Triton X-100). PLA2 catalyzes the calcium-dependent hydrolysis of the 2-acyl groups in 3-sn-phosphoglycerides. In Trimeresurus stejnegeri (Chinese green tree viper), this protein is Acidic phospholipase A2 Ts-A3.